The following is a 175-amino-acid chain: Co-chaperone protein HscB homolog (175 aa).

The J domain occupies 7 to 79; it reads SHFDLFDLPA…LKRATYLLHL (73 aa).

The protein belongs to the HscB family. Interacts with HscA and stimulates its ATPase activity.

Co-chaperone involved in the maturation of iron-sulfur cluster-containing proteins. Seems to help targeting proteins to be folded toward HscA. In Paraburkholderia phytofirmans (strain DSM 17436 / LMG 22146 / PsJN) (Burkholderia phytofirmans), this protein is Co-chaperone protein HscB homolog.